A 298-amino-acid polypeptide reads, in one-letter code: MVKIGSHVSMSGKKMLLAASEEAVSYGATTFMIYTGAPQNTRRKPIEELNIEAGRKHMEQNGIEEIIVHAPYIINVGNTTKPETFQLGVDFLRMEIERTSALGVAKQIVLHPGAHVGAGADAGIQQIIKGLNEVLTPDQTVNIALETMAGKGTECGRSFEEIAKIIDGVKYNEKLSVCFDTCHTHDAGYDIVNDFDGVLNEFDKIVGIDRLQVLHINDSKNVRGAGKDRHENIGFGHIGYKALHHIVHHPQLTHVPKILETPYVGEDKKDKKPPYKLEIEMLKNGTFDEGLLEKIKAQ.

His69, His111, Glu146, Asp180, His183, His215, Asp228, His230, and Glu260 together coordinate Zn(2+).

The protein belongs to the AP endonuclease 2 family. Zn(2+) serves as cofactor.

It catalyses the reaction Endonucleolytic cleavage to 5'-phosphooligonucleotide end-products.. Its function is as follows. Endonuclease IV plays a role in DNA repair. It cleaves phosphodiester bonds at apurinic or apyrimidinic (AP) sites, generating a 3'-hydroxyl group and a 5'-terminal sugar phosphate. This is Probable endonuclease 4 from Bacillus cereus (strain AH820).